Consider the following 364-residue polypeptide: PDZ and LIM domain protein 3 (364 aa).

Residues 1 to 84 (MPQTVILPGP…QLCLKIDRGE (84 aa)) form the PDZ domain. 3 positions are modified to phosphoserine: serine 18, serine 93, and serine 264. One can recognise an LIM zinc-binding domain in the interval 292–351 (PLCDKCGSGIVGAVVKARDKYRHPECFVCADCNLNLKQKGYFFIEGELYCETHARARTKP).

In terms of assembly, interacts with ACTN2. Forms a heterodimer with PDLIM4 (via LIM domain). In terms of tissue distribution, isoform 1 is highly expressed in differentiated skeletal muscle. Isoform 2 is heart-specific.

It localises to the cytoplasm. The protein localises to the myofibril. Its subcellular location is the sarcomere. The protein resides in the z line. May play a role in the organization of actin filament arrays within muscle cells. The protein is PDZ and LIM domain protein 3 (PDLIM3) of Homo sapiens (Human).